The chain runs to 390 residues: O-phospho-L-seryl-tRNA:Cys-tRNA synthase 2 (390 aa).

Residues 83–84 (AR), N187, and 210–212 (SGH) contribute to the pyridoxal 5'-phosphate site. At K213 the chain carries N6-(pyridoxal phosphate)lysine.

This sequence belongs to the SepCysS family. As to quaternary structure, homodimer. Interacts with SepRS. Pyridoxal 5'-phosphate serves as cofactor.

The catalysed reaction is O-phospho-L-seryl-tRNA(Cys) + hydrogen sulfide + H(+) = L-cysteinyl-tRNA(Cys) + phosphate. In terms of biological role, converts O-phospho-L-seryl-tRNA(Cys) (Sep-tRNA(Cys)) to L-cysteinyl-tRNA(Cys) (Cys-tRNA(Cys)). The sequence is that of O-phospho-L-seryl-tRNA:Cys-tRNA synthase 2 from Archaeoglobus fulgidus (strain ATCC 49558 / DSM 4304 / JCM 9628 / NBRC 100126 / VC-16).